The sequence spans 520 residues: Mu-like prophage FluMu protein gp29 (520 aa).

To phage Mu protein gp29.

The polypeptide is Mu-like prophage FluMu protein gp29 (Haemophilus influenzae (strain ATCC 51907 / DSM 11121 / KW20 / Rd)).